Here is a 119-residue protein sequence, read N- to C-terminus: Large ribosomal subunit protein uL18 (119 aa).

The segment at 1-20 (MISKPDKNKTRQKRHTRVRG) is disordered. Residues 10–20 (TRQKRHTRVRG) show a composition bias toward basic residues.

This sequence belongs to the universal ribosomal protein uL18 family. Part of the 50S ribosomal subunit; part of the 5S rRNA/L5/L18/L25 subcomplex. Contacts the 5S and 23S rRNAs.

Functionally, this is one of the proteins that bind and probably mediate the attachment of the 5S RNA into the large ribosomal subunit, where it forms part of the central protuberance. The protein is Large ribosomal subunit protein uL18 of Latilactobacillus sakei subsp. sakei (strain 23K) (Lactobacillus sakei subsp. sakei).